A 1077-amino-acid chain; its full sequence is Endo-1,4-beta-xylanase Y (1077 aa).

The first 26 residues, 1-26 (MKNKRVLAKITALVVLLGVFFVLPSN), serve as a signal peptide directing secretion. Residues 33–180 (DYEVVHDTFE…IFDDVTITRK (148 aa)) form the CBM-cenC 1 domain. Residues 189–538 (YAANAVLKDM…KPAYNAVASI (350 aa)) form the GH10 domain. The Proton donor role is filled by glutamate 337. The Nucleophile role is filled by glutamate 460. Residues 543-563 (EWGDGNNPAGGGGGGKPEEPD) form a disordered region. The CBM-cenC 2 domain maps to 565-714 (NGYYYHDTFE…YIDEAIGAVA (150 aa)). In terms of domain architecture, Dockerin spans 728 to 796 (PPVLLGDVNG…LLRVIDKFPV (69 aa)).

Belongs to the glycosyl hydrolase 10 (cellulase F) family.

It catalyses the reaction Endohydrolysis of (1-&gt;4)-beta-D-xylosidic linkages in xylans.. This Acetivibrio thermocellus (Hungateiclostridium thermocellum) protein is Endo-1,4-beta-xylanase Y (xynY).